We begin with the raw amino-acid sequence, 333 residues long: Holliday junction branch migration complex subunit RuvB (333 aa).

Residues Met-1–Tyr-182 are large ATPase domain (RuvB-L). ATP-binding positions include Leu-21, Arg-22, Gly-63, Lys-66, Thr-67, Thr-68, Glu-129–Tyr-131, Arg-172, Tyr-182, and Arg-219. Thr-67 provides a ligand contact to Mg(2+). Residues His-183–Gln-253 are small ATPAse domain (RuvB-S). The segment at Arg-256–Arg-333 is head domain (RuvB-H). DNA is bound by residues Arg-311 and Arg-316.

The protein belongs to the RuvB family. In terms of assembly, homohexamer. Forms an RuvA(8)-RuvB(12)-Holliday junction (HJ) complex. HJ DNA is sandwiched between 2 RuvA tetramers; dsDNA enters through RuvA and exits via RuvB. An RuvB hexamer assembles on each DNA strand where it exits the tetramer. Each RuvB hexamer is contacted by two RuvA subunits (via domain III) on 2 adjacent RuvB subunits; this complex drives branch migration. In the full resolvosome a probable DNA-RuvA(4)-RuvB(12)-RuvC(2) complex forms which resolves the HJ.

Its subcellular location is the cytoplasm. It carries out the reaction ATP + H2O = ADP + phosphate + H(+). Its function is as follows. The RuvA-RuvB-RuvC complex processes Holliday junction (HJ) DNA during genetic recombination and DNA repair, while the RuvA-RuvB complex plays an important role in the rescue of blocked DNA replication forks via replication fork reversal (RFR). RuvA specifically binds to HJ cruciform DNA, conferring on it an open structure. The RuvB hexamer acts as an ATP-dependent pump, pulling dsDNA into and through the RuvAB complex. RuvB forms 2 homohexamers on either side of HJ DNA bound by 1 or 2 RuvA tetramers; 4 subunits per hexamer contact DNA at a time. Coordinated motions by a converter formed by DNA-disengaged RuvB subunits stimulates ATP hydrolysis and nucleotide exchange. Immobilization of the converter enables RuvB to convert the ATP-contained energy into a lever motion, pulling 2 nucleotides of DNA out of the RuvA tetramer per ATP hydrolyzed, thus driving DNA branch migration. The RuvB motors rotate together with the DNA substrate, which together with the progressing nucleotide cycle form the mechanistic basis for DNA recombination by continuous HJ branch migration. Branch migration allows RuvC to scan DNA until it finds its consensus sequence, where it cleaves and resolves cruciform DNA. In Geobacillus kaustophilus (strain HTA426), this protein is Holliday junction branch migration complex subunit RuvB.